Consider the following 333-residue polypeptide: S-adenosylmethionine decarboxylase proenzyme (333 aa).

F7 is a substrate binding site. Residues E8 and E11 contribute to the active site. Residue E67 participates in substrate binding. S68 serves as the catalytic Schiff-base intermediate with substrate; via pyruvic acid. A Pyruvic acid (Ser); by autocatalysis modification is found at S68. C82 functions as the Proton donor; for catalytic activity in the catalytic mechanism. F223 is a binding site for substrate. Residues S229 and H243 each act as proton acceptor; for processing activity in the active site. Position 247 (E247) interacts with substrate. Residue S298 is modified to Phosphoserine.

This sequence belongs to the eukaryotic AdoMetDC family. Heterotetramer of two alpha and two beta chains. Pyruvate is required as a cofactor. Is synthesized initially as an inactive proenzyme. Formation of the active enzyme involves a self-maturation process in which the active site pyruvoyl group is generated from an internal serine residue via an autocatalytic post-translational modification. Two non-identical subunits are generated from the proenzyme in this reaction, and the pyruvate is formed at the N-terminus of the alpha chain, which is derived from the carboxyl end of the proenzyme. The post-translation cleavage follows an unusual pathway, termed non-hydrolytic serinolysis, in which the side chain hydroxyl group of the serine supplies its oxygen atom to form the C-terminus of the beta chain, while the remainder of the serine residue undergoes an oxidative deamination to produce ammonia and the pyruvoyl group blocking the N-terminus of the alpha chain.

It carries out the reaction S-adenosyl-L-methionine + H(+) = S-adenosyl 3-(methylsulfanyl)propylamine + CO2. It participates in amine and polyamine biosynthesis; S-adenosylmethioninamine biosynthesis; S-adenosylmethioninamine from S-adenosyl-L-methionine: step 1/1. Essential for biosynthesis of the polyamines spermidine and spermine. Promotes maintenance and self-renewal of embryonic stem cells, by maintaining spermine levels. The protein is S-adenosylmethionine decarboxylase proenzyme (Amd1) of Rattus norvegicus (Rat).